A 357-amino-acid polypeptide reads, in one-letter code: Heat-inducible transcription repressor HrcA (357 aa).

It belongs to the HrcA family.

In terms of biological role, negative regulator of class I heat shock genes (grpE-dnaK-dnaJ and groELS operons). Prevents heat-shock induction of these operons. The chain is Heat-inducible transcription repressor HrcA from Chlorobium phaeovibrioides (strain DSM 265 / 1930) (Prosthecochloris vibrioformis (strain DSM 265)).